Here is a 295-residue protein sequence, read N- to C-terminus: Tyrosine recombinase XerC (295 aa).

Residues 1–85 (MQTYLQKYWN…ALRQFLAFLV (85 aa)) enclose the Core-binding (CB) domain. The Tyr recombinase domain maps to 106–285 (HLPKNINAEQ…NFQHLAEVYD (180 aa)). Active-site residues include R145, K169, H237, R240, and H263. Y272 (O-(3'-phospho-DNA)-tyrosine intermediate) is an active-site residue.

This sequence belongs to the 'phage' integrase family. XerC subfamily. As to quaternary structure, forms a cyclic heterotetrameric complex composed of two molecules of XerC and two molecules of XerD.

The protein localises to the cytoplasm. Its function is as follows. Site-specific tyrosine recombinase, which acts by catalyzing the cutting and rejoining of the recombining DNA molecules. The XerC-XerD complex is essential to convert dimers of the bacterial chromosome into monomers to permit their segregation at cell division. It also contributes to the segregational stability of plasmids. The protein is Tyrosine recombinase XerC of Mannheimia succiniciproducens (strain KCTC 0769BP / MBEL55E).